A 398-amino-acid polypeptide reads, in one-letter code: Immunoglobulin heavy constant alpha 1 (398 aa).

Residues Ala-1–Thr-364 lie on the Extracellular side of the membrane. Positions Pro-6–Thr-98 constitute an Ig-like 1 domain. Cystine bridges form between Cys-26–Cys-85 and Cys-77–Cys-101. The tract at residues Asp-96–Cys-122 is disordered. Positions Cys-101–Ser-119 are enriched in pro residues. O-linked (GalNAc...) serine glycosylation is present at Ser-105. O-linked (GalNAc...) threonine glycosylation is found at Thr-106 and Thr-109. Residues Ser-111 and Ser-113 are each glycosylated (O-linked (GalNAc...) serine). O-linked (GalNAc...) threonine glycosylation is found at Thr-114 and Thr-117. Residues Ser-119 and Ser-121 are each glycosylated (O-linked (GalNAc...) serine). Disulfide bonds link Cys-123-Cys-180, Cys-147-Cys-204, and Cys-250-Cys-313. 2 Ig-like domains span residues Pro-125–Ser-220 and Pro-228–Asp-330. Residue Asn-144 is glycosylated (N-linked (GlcNAc...) (complex) asparagine). The N-linked (GlcNAc...) (complex) asparagine glycan is linked to Pro-340. Glu-352 provides a ligand contact to 3-hydroxy-L-kynurenine. The chain crosses the membrane as a helical span at residues Ile-365 to Val-383. Residues Thr-384–Tyr-398 are Cytoplasmic-facing.

In terms of assembly, immunoglobulins are composed of two identical heavy chains and two identical light chains; disulfide-linked. Monomeric or polymeric. Part of the secretory IgA (sIgA) complex that consists of two, four or five IgA monomers, and two additional non-Ig polypeptides, namely the JCHAIN and the secretory component (the proteolytic product of PIGR). Post-translationally, 3-Hydroxykynurenine, an oxidized tryptophan metabolite that is common in biological fluids, reacts with alpha-1-microglobulin to form heterogeneous polycyclic chromophores including hydroxanthommatin. The chromophore reacts with accessible cysteines forming non-reducible thioether cross-links with Ig alpha-1 chain C region Cys-352. In terms of processing, N- and O-glycosylated. N-glycan at Asn-144: Hex5HexNAc4.

It is found in the secreted. The protein localises to the cell membrane. Its function is as follows. Constant region of immunoglobulin heavy chains. Immunoglobulins, also known as antibodies, are membrane-bound or secreted glycoproteins produced by B lymphocytes. In the recognition phase of humoral immunity, the membrane-bound immunoglobulins serve as receptors which, upon binding of a specific antigen, trigger the clonal expansion and differentiation of B lymphocytes into immunoglobulins-secreting plasma cells. Secreted immunoglobulins mediate the effector phase of humoral immunity, which results in the elimination of bound antigens. The antigen binding site is formed by the variable domain of one heavy chain, together with that of its associated light chain. Thus, each immunoglobulin has two antigen binding sites with remarkable affinity for a particular antigen. The variable domains are assembled by a process called V-(D)-J rearrangement and can then be subjected to somatic hypermutations which, after exposure to antigen and selection, allow affinity maturation for a particular antigen. Ig alpha is the major immunoglobulin class in body secretions. The polypeptide is Immunoglobulin heavy constant alpha 1 (Homo sapiens (Human)).